We begin with the raw amino-acid sequence, 222 residues long: Small ribosomal subunit protein uS7m (222 aa).

A mitochondrion-targeting transit peptide spans 1–14 (MTTKLARFAQKRWI).

It belongs to the universal ribosomal protein uS7 family. In terms of assembly, component of the mitochondrial ribosome small subunit (28S) which comprises a 12S rRNA and about 30 distinct proteins.

Its subcellular location is the mitochondrion. The protein is Small ribosomal subunit protein uS7m (mrps-7) of Caenorhabditis elegans.